A 304-amino-acid chain; its full sequence is UDP-N-acetylenolpyruvoylglucosamine reductase (304 aa).

The FAD-binding PCMH-type domain maps to 33 to 198 (RVGGPADILV…IEATVELESG (166 aa)). Arg-177 is a catalytic residue. Ser-227 serves as the catalytic Proton donor. The active site involves Glu-297.

Belongs to the MurB family. Requires FAD as cofactor.

It is found in the cytoplasm. It carries out the reaction UDP-N-acetyl-alpha-D-muramate + NADP(+) = UDP-N-acetyl-3-O-(1-carboxyvinyl)-alpha-D-glucosamine + NADPH + H(+). It participates in cell wall biogenesis; peptidoglycan biosynthesis. Cell wall formation. The polypeptide is UDP-N-acetylenolpyruvoylglucosamine reductase (Clostridium perfringens (strain ATCC 13124 / DSM 756 / JCM 1290 / NCIMB 6125 / NCTC 8237 / Type A)).